The following is a 256-amino-acid chain: 5-keto-4-deoxy-D-glucarate aldolase (256 aa).

His50 serves as the catalytic Proton acceptor. Gln151 contributes to the substrate binding site. Glu153 provides a ligand contact to Mg(2+). The substrate site is built by Ser178 and Asp179. A Mg(2+)-binding site is contributed by Asp179.

It belongs to the HpcH/HpaI aldolase family. KDGluc aldolase subfamily. As to quaternary structure, homohexamer; trimer of dimers. The cofactor is Mg(2+).

It carries out the reaction 5-dehydro-4-deoxy-D-glucarate = 2-hydroxy-3-oxopropanoate + pyruvate. The enzyme catalyses 2-dehydro-3-deoxy-D-glucarate = 2-hydroxy-3-oxopropanoate + pyruvate. It functions in the pathway carbohydrate acid metabolism; galactarate degradation; D-glycerate from galactarate: step 2/3. Catalyzes the reversible retro-aldol cleavage of both 5-keto-4-deoxy-D-glucarate and 2-keto-3-deoxy-D-glucarate to pyruvate and tartronic semialdehyde. This Shigella dysenteriae serotype 1 (strain Sd197) protein is 5-keto-4-deoxy-D-glucarate aldolase.